The chain runs to 1151 residues: Protein BREAST CANCER SUSCEPTIBILITY 2 homolog A (1151 aa).

BRCA2 repeat units lie at residues Met-63–Thr-97, Thr-116–Ile-150, Phe-163–Asp-197, and Leu-257–Leu-291. The disordered stretch occupies residues Gly-408 to Ile-427.

Interacts with RAD51 and DMC1. Interacts with DSS1(I). Expressed in flower buds.

Involved in double-strand break repair and/or homologous recombination by mediating RAD51- and DMC1-facilitated DNA repair. Plays an essential role in both somatic and meiotic homologous recombination. Is crucial for the formation of RAD51 and DMC1 foci during male meiotic homologous recombination in prophase I. The chain is Protein BREAST CANCER SUSCEPTIBILITY 2 homolog A from Arabidopsis thaliana (Mouse-ear cress).